A 544-amino-acid chain; its full sequence is MKDSMSILTQTPSEPNAAHPQLHHHLSTLQQQHHQHHLHYGLQPPAVAHSIHSTTTMSSGGSTTTASGIGKPNRSRFMINDILAGSAAAAFYKQQQHHQQLHHHNNNNNSGSSGGSSPAHSNNNNNINGDNCEASNVAGVGVLPSALHHPQPHPPTHPHTHPHALMHPHGKLGHFPPTAGGNGLNVAQYAAAMQQHYAAAAAAAAARNNAAAAAAAAAAAAAAGVAAPPVDGGVDGGVGLAPPAGGDLDDSSDYHEENEDCDSGNMDDHSVCSNGGKDDDGNSVKSGSTSDMSGLSKKQRKARTAFTDHQLQTLEKSFERQKYLSVQERQELAHKLDLSDCQVKTWYQNRRTKWKRQTAVGLELLAEAGNFAAFQRLYGGSPYLGAWPYAAAAGAAHGATPHTNIDIYYRQAAAAAAMQKPLPYNLYAGVPSVGVGVGVGVGPAPFSHLSASSSLSSLSSYYQSAAAAASAANPGGPHPVAPPPSVGGGSPPSGLVKPIPAHSASASPPPRPPSTPSPTLNPGSPPGRSVDSCSQSDDEDQIQV.

The span at 53 to 70 shows a compositional bias: low complexity; it reads STTTMSSGGSTTTASGIG. 4 disordered regions span residues 53-73, 92-179, 236-308, and 471-544; these read STTT…GKPN, YKQQ…PPTA, GGVG…AFTD, and AANP…QIQV. Residues 95-105 show a composition bias toward basic residues; the sequence is QQHHQQLHHHN. The span at 106–131 shows a compositional bias: low complexity; that stretch reads NNNNSGSSGGSSPAHSNNNNNINGDN. The span at 156–172 shows a compositional bias: basic residues; it reads THPHTHPHALMHPHGKL. A compositionally biased stretch (acidic residues) spans 247-262; that stretch reads DLDDSSDYHEENEDCD. A compositionally biased stretch (basic and acidic residues) spans 266-282; the sequence is MDDHSVCSNGGKDDDGN. Over residues 283–293 the composition is skewed to polar residues; it reads SVKSGSTSDMS. The segment at residues 299–358 is a DNA-binding region (homeobox); the sequence is QRKARTAFTDHQLQTLEKSFERQKYLSVQERQELAHKLDLSDCQVKTWYQNRRTKWKRQT. The segment covering 476–485 has biased composition (pro residues); sequence GPHPVAPPPS. Positions 492 to 506 are enriched in low complexity; the sequence is PSGLVKPIPAHSASA. The span at 507–516 shows a compositional bias: pro residues; that stretch reads SPPPRPPSTP.

This sequence belongs to the Antp homeobox family. In terms of tissue distribution, B-H1 and B-H2 are abundant in the eye-antenna imaginal disk. Expressed in R1 and R6 cells throughout larval stage until 30 hours after puparium formation, at which time expression is seen in the anterior and posterior primary pigment cells. Coexpressed in embryonic glial cells, neurons of the CNS and PNS, most latitudinal anterior cells of the developing notum and the central circular region of the leg and antennal imaginal disk throughout larval development.

It localises to the nucleus. Its function is as follows. B-H1 and B-H2 are regulated by members of the wg signaling pathway; wg and dpp. B-H1 and B-H2 are coexpressed and functionally required in R1 and R6 receptor cells and primary pigment cells for normal eye development. Coexpression is also required for the fate determination of external sensory organs, formation of notal microchaetae, formation of presutural macrochaetae, antennal development and for distal leg morphogenesis; segmentation and specification of tarsal segments 3-5. The protein is Homeobox protein B-H1 (B-H1) of Drosophila melanogaster (Fruit fly).